The sequence spans 81 residues: Large ribosomal subunit protein bL27m (81 aa).

A compositionally biased stretch (polar residues) spans 1–11 (MATKKSGGSSR). The tract at residues 1–20 (MATKKSGGSSRNGRDSKGRR) is disordered.

This sequence belongs to the bacterial ribosomal protein bL27 family.

The protein localises to the mitochondrion. This Reclinomonas americana protein is Large ribosomal subunit protein bL27m (RPL27).